Reading from the N-terminus, the 64-residue chain is Putative antitoxin VapB4 (64 aa).

This sequence belongs to the UPF0165 family.

Possibly the antitoxin component of a type II toxin-antitoxin (TA) system. Its cognate toxin is VapC4 (Potential). The chain is Putative antitoxin VapB4 (vapB4) from Archaeoglobus fulgidus (strain ATCC 49558 / DSM 4304 / JCM 9628 / NBRC 100126 / VC-16).